A 282-amino-acid polypeptide reads, in one-letter code: Aquaporin-6 (282 aa).

Over 1–25 (MDAVEPGGRGWASMLACRLWKAISR) the chain is Cytoplasmic. Residues 26 to 46 (ALFAEFLATGLYVFFGVGSVM) form a helical membrane-spanning segment. The Extracellular portion of the chain corresponds to 47-54 (RWPTALPS). Residues 55–73 (VLQIAITFNLVTAMAVQVT) traverse the membrane as a helical segment. Residues 74–78 (WKASG) lie on the Cytoplasmic side of the membrane. The discontinuously helical intramembrane region spans 79-88 (AHANPAVTLA). Positions 82-84 (NPA) match the NPA 1 motif. Residues 89–99 (FLVGSHISLPR) lie on the Cytoplasmic side of the membrane. The helical transmembrane segment at 100-121 (AVAYVAAQLVGATVGAALLYGV) threads the bilayer. Residues 122-141 (MPGDIRETLGINVVRNSVST) lie on the Extracellular side of the membrane. A helical membrane pass occupies residues 142–162 (GQAVAVELLLTLQLVLCVFAS). At 163 to 168 (TDSRQT) the chain is on the cytoplasmic side. A helical transmembrane segment spans residues 169–188 (SGSPATMIGISVALGHLIGI). The Extracellular portion of the chain corresponds to 189–192 (HFTG). Positions 193 to 205 (CSMNPARSFGPAI) form an intramembrane region, discontinuously helical. Residues 196-198 (NPA) carry the NPA 2 motif. Residues 206 to 213 (IIGKFTVH) are Extracellular-facing. A helical transmembrane segment spans residues 214 to 234 (WVFWVGPLMGALLASLIYNFV). Topologically, residues 235–282 (LFPDTKTLAQRLAILTGTVEVGTGAGAGAEPLKKESQPGSGAVEMESV) are cytoplasmic. The tract at residues 260 to 282 (GAGAEPLKKESQPGSGAVEMESV) is disordered.

The protein belongs to the MIP/aquaporin (TC 1.A.8) family. As to quaternary structure, homotetramer; each monomer provides an independent solute pore.

It localises to the cytoplasmic vesicle membrane. The catalysed reaction is nitrate(in) = nitrate(out). The enzyme catalyses iodide(out) = iodide(in). It carries out the reaction bromide(in) = bromide(out). It catalyses the reaction chloride(in) = chloride(out). The catalysed reaction is Na(+)(in) = Na(+)(out). The enzyme catalyses H2O(in) = H2O(out). It carries out the reaction CO2(out) = CO2(in). It catalyses the reaction NH4(+)(in) = NH4(+)(out). Aquaporins form homotetrameric transmembrane channels, with each monomer independently mediating water transport across the plasma membrane along its osmotic gradient. Unlike classical aquaporins, AQP6 is an intracellular channel with selective anion permeability, particularly for nitrate, and exhibits very low water permeability. It may also facilitate the transport of gases, such as CO2 and NH4(+), as demonstrated in vitro. The protein is Aquaporin-6 of Homo sapiens (Human).